A 300-amino-acid polypeptide reads, in one-letter code: Tumor necrosis factor receptor superfamily member 6B (300 aa).

The N-terminal stretch at 1–29 (MRALEGPGLSLLCLVLALPALLPVPAVRG) is a signal peptide. TNFR-Cys repeat units follow at residues 31–70 (AETP…PTTC), 72–113 (PCPP…NRAC), 115–150 (CRTG…NTQC), and 152–193 (PCPP…DTLC). Cystine bridges form between Cys49-Cys62, Cys52-Cys70, Cys73-Cys88, Cys91-Cys105, Cys95-Cys113, Cys115-Cys126, Cys132-Cys150, and Cys153-Cys168. An N-linked (GlcNAc...) asparagine glycan is attached at Asn173. Cysteines 174 and 193 form a disulfide.

In terms of tissue distribution, detected in fetal lung, brain and liver. Detected in adult stomach, spinal cord, lymph node, trachea, spleen, colon and lung. Highly expressed in several primary tumors from colon, stomach, rectum, esophagus and in SW480 colon carcinoma cells.

It is found in the secreted. Decoy receptor that can neutralize the cytotoxic ligands TNFS14/LIGHT, TNFSF15 and TNFSF6/FASL. Protects against apoptosis. This chain is Tumor necrosis factor receptor superfamily member 6B (TNFRSF6B), found in Homo sapiens (Human).